Here is a 231-residue protein sequence, read N- to C-terminus: Heptaprenylglyceryl phosphate synthase (231 aa).

A sn-glycerol 1-phosphate-binding site is contributed by K12. Residues D14 and T40 each coordinate Mg(2+). Sn-glycerol 1-phosphate is bound by residues 159 to 164, G189, and 209 to 210; these read YMEYSG and GN.

Belongs to the GGGP/HepGP synthase family. Group I subfamily. In terms of assembly, homodimer. Requires Mg(2+) as cofactor.

It catalyses the reaction sn-glycerol 1-phosphate + all-trans-heptaprenyl diphosphate = 3-heptaprenyl-sn-glycero-1-phosphate + diphosphate. It participates in membrane lipid metabolism; glycerophospholipid metabolism. Its function is as follows. Prenyltransferase that catalyzes in vivo the transfer of the heptaprenyl moiety of heptaprenyl pyrophosphate (HepPP; 35 carbon atoms) to the C3 hydroxyl of sn-glycerol-1-phosphate (G1P), producing heptaprenylglyceryl phosphate (HepGP). This reaction is an ether-bond-formation step in the biosynthesis of archaea-type G1P-based membrane lipids found in Bacillales. The polypeptide is Heptaprenylglyceryl phosphate synthase (Anoxybacillus flavithermus (strain DSM 21510 / WK1)).